Consider the following 347-residue polypeptide: P2Y purinoceptor 12 (347 aa).

The Extracellular portion of the chain corresponds to 1 to 33 (MDVPGVNTTSANTTFSPGTSTLCVRDYKITQVL). Residues Asn7 and Asn12 are each glycosylated (N-linked (GlcNAc...) asparagine). 2 disulfide bridges follow: Cys23–Cys276 and Cys103–Cys181. The chain crosses the membrane as a helical span at residues 34 to 56 (FPLLYTVLFFAGLITNSLAMRIF). The Cytoplasmic segment spans residues 57–67 (FQIRSKSNFII). A phosphoserine mark is found at Ser61 and Ser63. The chain crosses the membrane as a helical span at residues 68 to 88 (FLKNTVISDLLMILTFPFKIL). The Extracellular segment spans residues 89–103 (SDAKLGAGPLRTLVC). ADP-binding residues include Arg99, Cys103, and Tyr111. A helical membrane pass occupies residues 104–124 (QVTSVTFYFTMYISISFLGLI). Over 125–148 (TIDRYLKTTRPFKTSSPSNLLGAK) the chain is Cytoplasmic. Residues 149–168 (ILSVVIWAFMFLISLPNMIL) traverse the membrane as a helical segment. ADP-binding positions include 162 to 165 (SLPN), 181 to 185 (CSFLK), His193, and Asn197. Over 169-191 (TNRRPKDKDVTKCSFLKSEFGLV) the chain is Extracellular. The chain crosses the membrane as a helical span at residues 192-213 (WHEIVNYICQVIFWINFLIVIV). At 214 to 239 (CYSLITKELYRSYVRTRGSAKVPKKK) the chain is on the cytoplasmic side. A helical transmembrane segment spans residues 240 to 265 (VNVKVFIIIAVFFICFVPFHFARIPY). ADP is bound by residues 262-265 (RIPY), Gln269, and Lys286. The Extracellular portion of the chain corresponds to 266–284 (TLSQTRAVFDCSAENTLFY). A helical membrane pass occupies residues 285 to 304 (VKESTLWLTSLNACLDPFIY). The Cytoplasmic portion of the chain corresponds to 305–347 (FFLCKSFRNSLTSMLRCSNSTSTSGTNKKKGQEGGEPSEETPM). Positions 321 to 347 (CSNSTSTSGTNKKKGQEGGEPSEETPM) are disordered.

The protein belongs to the G-protein coupled receptor 1 family.

The protein localises to the cell membrane. Functionally, receptor for ADP and ATP coupled to G-proteins that inhibit the adenylyl cyclase second messenger system. Required for normal platelet aggregation and blood coagulation. The sequence is that of P2Y purinoceptor 12 (P2ry12) from Mus musculus (Mouse).